The following is a 433-amino-acid chain: Enolase (433 aa).

Gln-167 serves as a coordination point for (2R)-2-phosphoglycerate. Glu-209 (proton donor) is an active-site residue. Positions 246, 291, and 318 each coordinate Mg(2+). The (2R)-2-phosphoglycerate site is built by Lys-343, Arg-372, Ser-373, and Lys-394. The active-site Proton acceptor is the Lys-343.

Belongs to the enolase family. Component of the RNA degradosome, a multiprotein complex involved in RNA processing and mRNA degradation. Mg(2+) is required as a cofactor.

It localises to the cytoplasm. It is found in the secreted. The protein resides in the cell surface. The enzyme catalyses (2R)-2-phosphoglycerate = phosphoenolpyruvate + H2O. Its pathway is carbohydrate degradation; glycolysis; pyruvate from D-glyceraldehyde 3-phosphate: step 4/5. Its function is as follows. Catalyzes the reversible conversion of 2-phosphoglycerate (2-PG) into phosphoenolpyruvate (PEP). It is essential for the degradation of carbohydrates via glycolysis. The sequence is that of Enolase from Actinobacillus succinogenes (strain ATCC 55618 / DSM 22257 / CCUG 43843 / 130Z).